The chain runs to 162 residues: MWQLLLPLALGLGTMGLGRAELTTAQHRGLQVALEEFHKHPPVLWAFQVTSVDNAADTLFPAGQFVRLEFKLQQTSCRKKDWRKEDCKVKPNGRKRKCLACIKLDSKDQVLGRMVHCPIQTQVQRELDDAQDAQCSRVERAGEDPHSYYLPGQFAFIKALSP.

Residues 1-20 (MWQLLLPLALGLGTMGLGRA) form the signal peptide. 3 cysteine pairs are disulfide-bonded: Cys77–Cys87, Cys98–Cys117, and Cys101–Cys135. A propeptide spanning residues 156 to 162 (FIKALSP) is cleaved from the precursor.

Secreted in an inactive precursor form, prochemerin, which is proteolytically processed by a variety of extracellular proteases to generate forms with differing levels of bioactivity. For example, the removal of five amino acids results in chemerin-157, which exhibits the highest activity, while removal of six amino acids results in chemerin-156 which has slightly less activity. Some proteases are able to cleave at more than one site and chemerin forms may be sequentially processed by different enzymes to modulate activity levels. The coordinated expression and activity of chemerin-modifying enzymes is essential for regulating its bioactivation, inactivation and, consequently, biological function. Cathepsin G cleaves six C-terminal amino acids from prochemerin (chemerin-156), elastase is able to cleave five (chemerin-157), seven (chemerin-155) or ten (chemerin-152), plasmin cleaves four amino acids (chemerin-158), and tryptase cleaves four (chemerin-158) or seven (chemerin-155). Multiple cleavages might be required to fully activate chemerin, with an initial tryptase cleavage resulting in chemerin with low activity (chemerin-158), and a second cleavage by carboxypeptidase N or B producing highly active chemerin (chemerin-157).

The protein localises to the secreted. Functionally, adipocyte-secreted protein (adipokine) that regulates adipogenesis, metabolism and inflammation through activation of the chemokine-like receptor 1 (CMKLR1). Also acts as a ligand for CMKLR2. Can also bind to C-C chemokine receptor-like 2 (CCRL2), but with a lower affinity than it does to CMKLR1 or CMKLR2. Positively regulates adipocyte differentiation, modulates the expression of adipocyte genes involved in lipid and glucose metabolism and might play a role in angiogenesis, a process essential for the expansion of white adipose tissue. Also acts as a pro-inflammatory adipokine, causing an increase in secretion of pro-inflammatory and prodiabetic adipokines, which further impair adipose tissue metabolic function and have negative systemic effects including impaired insulin sensitivity, altered glucose and lipid metabolism, and a decrease in vascular function in other tissues. Can have both pro- and anti-inflammatory properties depending on the modality of enzymatic cleavage by different classes of proteases. Acts as a chemotactic factor for leukocyte populations expressing CMKLR1, particularly immature plasmacytoid dendritic cells, but also immature myeloid DCs, macrophages and natural killer cells. Exerts an anti-inflammatory role by preventing TNF/TNFA-induced VCAM1 expression and monocytes adhesion in vascular endothelial cells. The effect is mediated via inhibiting activation of NF-kappa-B and CRK/p38 through stimulation of AKT1/NOS3 signaling and nitric oxide production. Exhibits an antimicrobial function in the skin. This chain is Retinoic acid receptor responder protein 2 (RARRES2), found in Bos taurus (Bovine).